A 437-amino-acid chain; its full sequence is MSLFLDTARIEVKAGKGGDGAVAFRREKYVPDGGPAGGDGGKGGSVIFKVDEGMSTLMDFRYNRIFRGKPGEKGMNKGMHGRGAEDLIVHVPQGTTVKDNETGDVLVDLIEKDQEFAVAKGGRGGRGNIRFATPRNPAPEVAENGEPGEDKILLLELRVLADVGLVGFPSVGKSTLLSVVSNARPKIGAYHFTTITPNIGMVQVGYGDSFVMADMPGLIEGAHSGAGLGIQFLRHIERTRVLLHVLDMSELEGRDPYEDYKTINDELESYNLRLMERPQIIVANKMDMPEAAERLAEFKEKLAADLGPDKEMPEIFEVSGLTKTGLQGLLARTSELLAQTPEFLLYDEDELADETAYYGFEEEEKPFKVSRDDDGGWRLSGDKIERLFIMTNFDHDESVMKFARQMRAMGVDETLRSMGAKDGDYVRIQKFEFEFVD.

The 159-residue stretch at 2–160 folds into the Obg domain; the sequence is SLFLDTARIE…KILLLELRVL (159 aa). Residues 161–338 form the OBG-type G domain; it reads ADVGLVGFPS…LLARTSELLA (178 aa). GTP contacts are provided by residues 167-174, 192-196, 214-217, 284-287, and 319-321; these read GFPSVGKS, FTTIT, DMPG, NKMD, and SGL. Mg(2+) is bound by residues S174 and T194. The OCT domain maps to 359-437; it reads GFEEEEKPFK…IQKFEFEFVD (79 aa).

The protein belongs to the TRAFAC class OBG-HflX-like GTPase superfamily. OBG GTPase family. Monomer. The cofactor is Mg(2+).

The protein resides in the cytoplasm. Functionally, an essential GTPase which binds GTP, GDP and possibly (p)ppGpp with moderate affinity, with high nucleotide exchange rates and a fairly low GTP hydrolysis rate. Plays a role in control of the cell cycle, stress response, ribosome biogenesis and in those bacteria that undergo differentiation, in morphogenesis control. The protein is GTPase Obg of Lactococcus lactis subsp. lactis (strain IL1403) (Streptococcus lactis).